Consider the following 388-residue polypeptide: Lipid-A-disaccharide synthase (388 aa).

The protein belongs to the LpxB family.

The catalysed reaction is a lipid X + a UDP-2-N,3-O-bis[(3R)-3-hydroxyacyl]-alpha-D-glucosamine = a lipid A disaccharide + UDP + H(+). The protein operates within bacterial outer membrane biogenesis; LPS lipid A biosynthesis. Functionally, condensation of UDP-2,3-diacylglucosamine and 2,3-diacylglucosamine-1-phosphate to form lipid A disaccharide, a precursor of lipid A, a phosphorylated glycolipid that anchors the lipopolysaccharide to the outer membrane of the cell. This Burkholderia pseudomallei (strain K96243) protein is Lipid-A-disaccharide synthase.